The primary structure comprises 109 residues: Cytochrome c (109 aa).

Heme c-binding residues include C25, C28, H29, and M88.

Belongs to the cytochrome c family. Binds 1 heme c group covalently per subunit.

The protein resides in the mitochondrion intermembrane space. Its function is as follows. Electron carrier protein. The oxidized form of the cytochrome c heme group can accept an electron from the heme group of the cytochrome c1 subunit of cytochrome reductase. Cytochrome c then transfers this electron to the cytochrome oxidase complex, the final protein carrier in the mitochondrial electron-transport chain. This is Cytochrome c from Tetrahymena pyriformis.